We begin with the raw amino-acid sequence, 649 residues long: Probable potassium transport system protein Kup (649 aa).

Transmembrane regions (helical) follow at residues 1–21 (MAIV…LYTM), 42–62 (ILSL…VFIA), 84–104 (GAWL…DSVL), 126–146 (IMSG…VCLF), 159–179 (TFGT…LVNL), 195–215 (VEFL…TVFL), 235–255 (IYFT…GQGA), 286–306 (VAVL…ITGA), 334–354 (LYIP…LAMF), 364–384 (YGLA…VYIW), 390–410 (VGAV…FFAS), and 414–434 (FLHG…IMYT).

It belongs to the HAK/KUP transporter (TC 2.A.72) family.

The protein localises to the cell membrane. It catalyses the reaction K(+)(in) + H(+)(in) = K(+)(out) + H(+)(out). Functionally, transport of potassium into the cell. Likely operates as a K(+):H(+) symporter. In Bifidobacterium adolescentis (strain ATCC 15703 / DSM 20083 / NCTC 11814 / E194a), this protein is Probable potassium transport system protein Kup.